The sequence spans 369 residues: DNA replication and repair protein RecF (369 aa).

Position 30–37 (30–37) interacts with ATP; it reads GQNAQGKT.

It belongs to the RecF family.

The protein localises to the cytoplasm. Functionally, the RecF protein is involved in DNA metabolism; it is required for DNA replication and normal SOS inducibility. RecF binds preferentially to single-stranded, linear DNA. It also seems to bind ATP. The sequence is that of DNA replication and repair protein RecF from Acetivibrio thermocellus (strain ATCC 27405 / DSM 1237 / JCM 9322 / NBRC 103400 / NCIMB 10682 / NRRL B-4536 / VPI 7372) (Clostridium thermocellum).